The following is a 143-amino-acid chain: uncharacterized protein (143 aa).

The signal sequence occupies residues 1–32; that stretch reads MITNLRRRTAMAAAGLGAALGLGILLVPTVDA.

It to M.tuberculosis Rv1269c.

This is an uncharacterized protein from Mycobacterium tuberculosis (strain CDC 1551 / Oshkosh).